Here is a 497-residue protein sequence, read N- to C-terminus: Acetyl-coenzyme A carboxylase carboxyl transferase subunit beta (497 aa).

A CoA carboxyltransferase N-terminal domain is found at 217 to 489; that stretch reads LWLQCDNCYG…NQNSNQYSQY (273 aa). Residues Cys-221, Cys-224, Cys-240, and Cys-243 each coordinate Zn(2+). The segment at 221 to 243 adopts a C4-type zinc-finger fold; it reads CDNCYGLNYKKVLKSKMTICEQC.

This sequence belongs to the AccD/PCCB family. As to quaternary structure, acetyl-CoA carboxylase is a heterohexamer composed of biotin carboxyl carrier protein, biotin carboxylase and 2 subunits each of ACCase subunit alpha and ACCase plastid-coded subunit beta (accD). Zn(2+) is required as a cofactor.

The protein resides in the plastid. It catalyses the reaction N(6)-carboxybiotinyl-L-lysyl-[protein] + acetyl-CoA = N(6)-biotinyl-L-lysyl-[protein] + malonyl-CoA. It functions in the pathway lipid metabolism; malonyl-CoA biosynthesis; malonyl-CoA from acetyl-CoA: step 1/1. In terms of biological role, component of the acetyl coenzyme A carboxylase (ACC) complex. Biotin carboxylase (BC) catalyzes the carboxylation of biotin on its carrier protein (BCCP) and then the CO(2) group is transferred by the transcarboxylase to acetyl-CoA to form malonyl-CoA. The sequence is that of Acetyl-coenzyme A carboxylase carboxyl transferase subunit beta from Cuscuta reflexa (Southern Asian dodder).